The sequence spans 527 residues: UPF0053 protein YegH (527 aa).

Helical transmembrane passes span 14–34 (ITLI…IAIL), 51–71 (LLLA…LVTL), 81–101 (FTFS…LFKA), 122–142 (GAKF…FSLD), 145–165 (ITAV…VIAI), 185–205 (IVIL…AEGF), and 207–227 (FVIP…IEAL). CBS domains are found at residues 306–366 (MTSR…GEPL) and 371–429 (LIRQ…PNEV).

It belongs to the UPF0053 family.

The protein localises to the cell membrane. The chain is UPF0053 protein YegH (yegH) from Shigella flexneri.